A 344-amino-acid polypeptide reads, in one-letter code: HTH-type transcriptional regulator XC_2801 (344 aa).

The region spanning 3–60 (HDLNDTLIFVKVVEQGSFIAAANSLGLPKTTVSRKVQELETRLGARLLHRTTRRIGLT) is the HTH lysR-type domain. Positions 20 to 39 (FIAAANSLGLPKTTVSRKVQ) form a DNA-binding region, H-T-H motif.

It belongs to the LysR transcriptional regulatory family. In terms of assembly, interacts with the cyclic di-GMP effector XC_3703.

Activity is regulated by cyclic di-GMP. Cyclic di-GMP specifically binds to XC_3703, which inhibits the interaction of the XC_2801-XC_3703 complex with DNA and prevents the transcription of the target genes. Transcriptional regulator that directly or indirectly regulates the expression of virulence-related genes, including flhB, aaeA, fliL and flgG. Binds to the promoter of the target genes only in the presence of XC_3703. The chain is HTH-type transcriptional regulator XC_2801 from Xanthomonas campestris pv. campestris (strain 8004).